Consider the following 719-residue polypeptide: Probable phosphatidylinositol phosphate kinase DDB_G0267588 (719 aa).

Residues 47–261 are disordered; the sequence is VFSPIPPPPS…SDSPNRVRLN (215 aa). 2 stretches are compositionally biased toward low complexity: residues 57–77 and 87–104; these read TTDNTTNTTTTTIETTATDNT and IENNNNNNNSSISSPNSI. Positions 107-129 are enriched in basic and acidic residues; the sequence is ANKKDSIELEEDKEHSIKRKDGS. Polar residues predominate over residues 172–184; sequence FDATNDNHNPQEV. Positions 199–217 are enriched in low complexity; it reads TTTTTTTTTTTTSTNSTSN. 2 stretches are compositionally biased toward polar residues: residues 218–228 and 248–261; these read KLPNNGDNTVS and ASGSSDSPNRVRLN. Threonine 262 is modified (phosphothreonine). The region spanning 316–718 is the PIPK domain; that stretch reads NAVGKSMGTE…RFQEFLSTII (403 aa). The interval 579 to 638 is disordered; it reads RENEPPSPSLLRSTLEDSSDFESPSMEQSSAGQQQQQRGSGNYDNSGAGRDSTTGGAAPK. Over residues 606–619 the composition is skewed to low complexity; it reads QSSAGQQQQQRGSG.

In terms of processing, phosphorylated at Thr-262 by pkgB.

Functionally, may be involved in signaling events that underlie chemotaxis via the chemoattractant-mediated pkgB phosphorylation. This Dictyostelium discoideum (Social amoeba) protein is Probable phosphatidylinositol phosphate kinase DDB_G0267588.